A 192-amino-acid polypeptide reads, in one-letter code: Ion-translocating oxidoreductase complex subunit A (192 aa).

Transmembrane regions (helical) follow at residues 5 to 25 (ILLL…FLGL), 39 to 59 (IGMG…AYLV), 67 to 87 (LGIE…VVQF), 102 to 122 (LLGI…VALL), 134 to 154 (IIYG…FASM), and 171 to 191 (SIAM…TGLV).

It belongs to the NqrDE/RnfAE family. As to quaternary structure, the complex is composed of six subunits: RnfA, RnfB, RnfC, RnfD, RnfE and RnfG.

Its subcellular location is the cell inner membrane. Part of a membrane-bound complex that couples electron transfer with translocation of ions across the membrane. This is Ion-translocating oxidoreductase complex subunit A from Vibrio campbellii (strain ATCC BAA-1116).